Consider the following 247-residue polypeptide: Eukaryotic translation initiation factor 6-1 (247 aa).

Belongs to the eIF-6 family. Monomer. Associates with the 60S ribosomal subunit.

Its subcellular location is the cytoplasm. It localises to the nucleus. The protein localises to the nucleolus. Binds to the 60S ribosomal subunit and prevents its association with the 40S ribosomal subunit to form the 80S initiation complex in the cytoplasm. May also be involved in ribosome biogenesis. The sequence is that of Eukaryotic translation initiation factor 6-1 from Arabidopsis thaliana (Mouse-ear cress).